The sequence spans 693 residues: Homeobox protein caupolican (693 aa).

Disordered regions lie at residues 20-104 (TANT…PSRG), 288-331 (NKMT…PGNQ), 387-453 (AQSH…DCGI), 480-538 (YLGQ…PLSM), 561-627 (MHLP…SMHS), and 648-693 (YGHG…RSGS). Residues 41–59 (ASLSPSGGSTATGLTAGPL) are compositionally biased toward low complexity. The segment at residues 226–288 (LAARRKNATR…NARRRLKKEN (63 aa)) is a DNA-binding region (homeobox; TALE-type). Basic and acidic residues-rich tracts occupy residues 288-298 (NKMTWEPKNKT) and 308-317 (DDEKEKDAGD). 2 stretches are compositionally biased toward low complexity: residues 397–419 (HPQQ…QLQH) and 493–515 (QQLP…QQQQ). A compositionally biased stretch (basic residues) spans 516-527 (QHHHHPHHHHPH). The span at 609 to 627 (SSGGSSSSSGSSHSSSMHS) shows a compositional bias: low complexity. A compositionally biased stretch (basic residues) spans 651-675 (GHSHGHGHGHGHGLGHGHGLGHGHG).

The protein belongs to the TALE/IRO homeobox family.

The protein localises to the nucleus. Its function is as follows. Controls proneural and vein forming genes. Positive transcriptional controller of ac-sc (achaete-scute). May act as an activator that interacts with the transcriptional complex assembled on the ac and sc promoters and participates in transcription initiation. The protein is Homeobox protein caupolican (caup) of Drosophila melanogaster (Fruit fly).